A 401-amino-acid chain; its full sequence is 1-deoxy-D-xylulose 5-phosphate reductoisomerase (401 aa).

T10, G11, S12, I13, G36, N38, and N124 together coordinate NADPH. Residue K125 participates in 1-deoxy-D-xylulose 5-phosphate binding. NADPH is bound at residue E126. Mn(2+) is bound at residue D150. 4 residues coordinate 1-deoxy-D-xylulose 5-phosphate: S151, E152, S186, and H209. Position 152 (E152) interacts with Mn(2+). NADPH is bound at residue G215. Residues S222, N227, K228, and E231 each coordinate 1-deoxy-D-xylulose 5-phosphate. E231 is a binding site for Mn(2+).

It belongs to the DXR family. The cofactor is Mg(2+). It depends on Mn(2+) as a cofactor.

The catalysed reaction is 2-C-methyl-D-erythritol 4-phosphate + NADP(+) = 1-deoxy-D-xylulose 5-phosphate + NADPH + H(+). The protein operates within isoprenoid biosynthesis; isopentenyl diphosphate biosynthesis via DXP pathway; isopentenyl diphosphate from 1-deoxy-D-xylulose 5-phosphate: step 1/6. Its function is as follows. Catalyzes the NADPH-dependent rearrangement and reduction of 1-deoxy-D-xylulose-5-phosphate (DXP) to 2-C-methyl-D-erythritol 4-phosphate (MEP). The chain is 1-deoxy-D-xylulose 5-phosphate reductoisomerase from Vibrio parahaemolyticus serotype O3:K6 (strain RIMD 2210633).